The chain runs to 113 residues: Putative membrane protein insertion efficiency factor (113 aa).

It belongs to the UPF0161 family.

It localises to the cell inner membrane. In terms of biological role, could be involved in insertion of integral membrane proteins into the membrane. The polypeptide is Putative membrane protein insertion efficiency factor (Campylobacter jejuni subsp. doylei (strain ATCC BAA-1458 / RM4099 / 269.97)).